The following is an 843-amino-acid chain: Protein P (843 aa).

Positions Met1–Gln177 are terminal protein domain (TP). Positions Glu178–Leu346 are spacer. 2 disordered regions span residues Gly224–Ser273 and His288–Ser316. Over residues His288–Gly299 the composition is skewed to polar residues. A polymerase/reverse transcriptase domain (RT) region spans residues Glu347–Gln690. Residues Glu357–Ile600 form the Reverse transcriptase domain. The Mg(2+) site is built by Asp429, Asp551, and Asp552.

The protein belongs to the hepadnaviridae P protein family.

The catalysed reaction is DNA(n) + a 2'-deoxyribonucleoside 5'-triphosphate = DNA(n+1) + diphosphate. It carries out the reaction Endonucleolytic cleavage to 5'-phosphomonoester.. Its activity is regulated as follows. Activated by host HSP70 and HSP40 in vitro to be able to bind the epsilon loop of the pgRNA. Because deletion of the RNase H region renders the protein partly chaperone-independent, the chaperones may be needed indirectly to relieve occlusion of the RNA-binding site by this domain. Inhibited by several reverse-transcriptase inhibitors: Lamivudine, Adefovir and Entecavir. Its function is as follows. Multifunctional enzyme that converts the viral RNA genome into dsDNA in viral cytoplasmic capsids. This enzyme displays a DNA polymerase activity that can copy either DNA or RNA templates, and a ribonuclease H (RNase H) activity that cleaves the RNA strand of RNA-DNA heteroduplexes in a partially processive 3'- to 5'-endonucleasic mode. Neo-synthesized pregenomic RNA (pgRNA) are encapsidated together with the P protein, and reverse-transcribed inside the nucleocapsid. Initiation of reverse-transcription occurs first by binding the epsilon loop on the pgRNA genome, and is initiated by protein priming, thereby the 5'-end of (-)DNA is covalently linked to P protein. Partial (+)DNA is synthesized from the (-)DNA template and generates the relaxed circular DNA (RC-DNA) genome. After budding and infection, the RC-DNA migrates in the nucleus, and is converted into a plasmid-like covalently closed circular DNA (cccDNA). The activity of P protein does not seem to be necessary for cccDNA generation, and is presumably released from (+)DNA by host nuclear DNA repair machinery. The protein is Protein P of Homo sapiens (Human).